The primary structure comprises 306 residues: MSDGTSNAPTRKHTALPKAQILIEALPWLTRHHGKTVVIKFGGNAMIDEDLKAAFAQDVVFLRHAGLKPVVVHGGGPQISAALDKHGIVSEFKAGLRVTTEDAMDVVRMVLAGQVQRELVGLLNQHGPLAVGLTGEDAHTLTATKHQPEIDGELVDIGRVGEITEIDTGAIEALLADGRIPVVSSIARSQDDHHVYNVNADTAAAALAAALGAETLMVLTDVEGLYEDWPDSDEVISRLTASELEKLLPDLSSGMVPKMEGCLHAVRGGVTTARVIDGRVQHSILLEIFTDEGIGTMVVPDEQGES.

Substrate-binding positions include 75-76 (GG), R97, and N197.

The protein belongs to the acetylglutamate kinase family. ArgB subfamily.

It is found in the cytoplasm. It carries out the reaction N-acetyl-L-glutamate + ATP = N-acetyl-L-glutamyl 5-phosphate + ADP. It participates in amino-acid biosynthesis; L-arginine biosynthesis; N(2)-acetyl-L-ornithine from L-glutamate: step 2/4. Functionally, catalyzes the ATP-dependent phosphorylation of N-acetyl-L-glutamate. The protein is Acetylglutamate kinase of Streptomyces coelicolor (strain ATCC BAA-471 / A3(2) / M145).